Consider the following 165-residue polypeptide: V-type proton ATPase 16 kDa proteolipid subunit (165 aa).

Residues 1–10 are Lumenal-facing; that stretch reads MPSTFSGDET. The helical transmembrane segment at 11–33 threads the bilayer; it reads APFFGFLGAAAALVFSCMGAAYG. Topologically, residues 34-55 are cytoplasmic; the sequence is TAKSGVGVASMGVMRPELVMKS. Residues 56 to 76 form a helical membrane-spanning segment; sequence IVPVVMAGVLGIYGLIIAVII. Over 77 to 95 the chain is Lumenal; sequence STGINPKTKSYYLFDGYAH. The helical transmembrane segment at 96–117 threads the bilayer; sequence LSSGLACGLAGLSAGMAIGIVG. Topologically, residues 118–129 are cytoplasmic; the sequence is DAGVRANAQQPK. Residues 130–155 form a helical membrane-spanning segment; that stretch reads LFVGMILILIFAEALALYGLIVGIIL. Residues 156-165 are Lumenal-facing; sequence SSRAGQSRAE.

Belongs to the V-ATPase proteolipid subunit family. As to quaternary structure, V-ATPase is a heteromultimeric enzyme composed of a peripheral catalytic V1 complex (main components: subunits A, B, C, D, E, and F) attached to an integral membrane V0 proton pore complex (main component: the proteolipid protein; which is present as a hexamer that forms the proton-conducting pore).

The protein resides in the vacuole membrane. Functionally, proton-conducting pore forming subunit of the membrane integral V0 complex of vacuolar ATPase. V-ATPase is responsible for acidifying a variety of intracellular compartments in eukaryotic cells. The chain is V-type proton ATPase 16 kDa proteolipid subunit from Nicotiana tabacum (Common tobacco).